A 144-amino-acid polypeptide reads, in one-letter code: Large ribosomal subunit protein uL15 (144 aa).

Residues 1–57 (MKLNDLSPAPGSRREKHRPGRGIGSGLGKTGGRGHKGQSSRSGGTIAPGFEGGQQPL) are disordered. Positions 21 to 31 (RGIGSGLGKTG) are enriched in gly residues.

Belongs to the universal ribosomal protein uL15 family. Part of the 50S ribosomal subunit.

Binds to the 23S rRNA. This chain is Large ribosomal subunit protein uL15, found in Pseudomonas savastanoi pv. phaseolicola (strain 1448A / Race 6) (Pseudomonas syringae pv. phaseolicola (strain 1448A / Race 6)).